The following is a 115-amino-acid chain: UPF0738 protein SSP1780 (115 aa).

The protein belongs to the UPF0738 family.

This chain is UPF0738 protein SSP1780, found in Staphylococcus saprophyticus subsp. saprophyticus (strain ATCC 15305 / DSM 20229 / NCIMB 8711 / NCTC 7292 / S-41).